The sequence spans 201 residues: Ribosomal RNA large subunit methyltransferase E (201 aa).

5 residues coordinate S-adenosyl-L-methionine: G49, W51, D69, D90, and D113. K153 (proton acceptor) is an active-site residue.

Belongs to the class I-like SAM-binding methyltransferase superfamily. RNA methyltransferase RlmE family.

It localises to the cytoplasm. The enzyme catalyses uridine(2552) in 23S rRNA + S-adenosyl-L-methionine = 2'-O-methyluridine(2552) in 23S rRNA + S-adenosyl-L-homocysteine + H(+). In terms of biological role, specifically methylates the uridine in position 2552 of 23S rRNA at the 2'-O position of the ribose in the fully assembled 50S ribosomal subunit. This is Ribosomal RNA large subunit methyltransferase E from Desulfotalea psychrophila (strain LSv54 / DSM 12343).